The sequence spans 863 residues: MICAL-like protein 1 (863 aa).

The Calponin-homology (CH) domain maps to 2–108 (AGPRGALLAW…YVSQYYNHFC (107 aa)). Disordered stretches follow at residues 119-162 (RKGL…TPSS) and 224-670 (GTRS…PLIK). Residues 125-135 (CSPPSVAPTPV) show a composition bias toward pro residues. Composition is skewed to low complexity over residues 143-159 (GEEL…TGQT) and 224-244 (GTRS…HQQQ). In terms of domain architecture, LIM zinc-binding spans 162–225 (STCAACQQHV…EHCARLGPGT (64 aa)). Ser-295 and Ser-309 each carry phosphoserine. Position 318 is a phosphothreonine (Thr-318). Over residues 325 to 340 (LQQENLVEQAGSSSLV) the composition is skewed to polar residues. The segment covering 384–395 (APLPPSSSPGPP) has biased composition (pro residues). The residue at position 391 (Ser-391) is a Phosphoserine. The short motif at 425-427 (NPF) is the NPF1 element. Positions 427–438 (FEEEEEDKEEEA) are enriched in acidic residues. Residues 439-450 (PAAPSLATSPAL) are compositionally biased toward low complexity. Thr-467 and Thr-469 each carry phosphothreonine. Phosphoserine is present on residues Ser-470, Ser-471, Ser-484, and Ser-486. 3 stretches are compositionally biased toward low complexity: residues 482 to 495 (APSA…ASRL), 505 to 520 (PSPA…ESAS), and 553 to 566 (SLST…SGEL). A phosphoserine mark is found at Ser-578 and Ser-621. The NPF2 signature appears at 633 to 635 (NPF). Positions 638–656 (KPSPAASPATKKATKGSKP) are enriched in low complexity. The mediates the interaction with RAB13 and RAB35 and intramolecular interaction with the CH domain stretch occupies residues 652–863 (KGSKPVRPPA…AKSKSPRDKS (212 aa)). In terms of domain architecture, bMERB spans 671–818 (RKVQADQYIP…EEEEDKMLEA (148 aa)). A coiled-coil region spans residues 682-711 (EDIHGEMDTIERRLDALEHRGVLLEEKLRG). Positions 700–863 (HRGVLLEEKL…AKSKSPRDKS (164 aa)) are necessary and sufficient to associate with tubular recycling endosome membranes, mediate phosphatidic acid-binding and membrane tubulation. A Phosphoserine modification is found at Ser-740. Positions 785–830 (MQELVTLIEQRNAIINCLDEDRQREEEEDKMLEAMIKKKEFQREAE) form a coiled coil.

As to quaternary structure, homooligomer. Interacts (via NPF1 motif) with EHD1 (via EH domain); the interaction is direct and probably recruits EHD1 to membranes. Interacts with EHD3 (via EH domain). Interacts with RAB35 (GTP-bound form); the interaction is direct and probably recruits MICALL1 to membranes. Interacts with ACAP2; the interaction is indirect through RAB35. Interacts with RAB8A (GTP-bound form); regulates RAB8A association with recycling endosomes. Interacts with RAB13 (GTP-bound form). Interacts with ARF6 (GTP-bound form). Interacts with PACSIN2 (via the SH3 domain). Interacts with DPYSL2.

It localises to the recycling endosome membrane. Its subcellular location is the late endosome membrane. The protein resides in the cell projection. It is found in the cilium membrane. The protein localises to the cytoplasm. It localises to the cytoskeleton. Its subcellular location is the microtubule organizing center. The protein resides in the centrosome. It is found in the centriole. Functionally, lipid-binding protein with higher affinity for phosphatidic acid, a lipid enriched in recycling endosome membranes. On endosome membranes, acts as a downstream effector of Rab proteins recruiting cytosolic proteins to regulate membrane tubulation. Involved in a late step of receptor-mediated endocytosis regulating for instance endocytosed-EGF receptor trafficking. Alternatively, regulates slow endocytic recycling of endocytosed proteins back to the plasma membrane. Also involved in cargo protein delivery to the plasma membrane. Plays a role in ciliogenesis coordination, recruits EHD1 to primary cilium where it is anchored to the centriole through interaction with tubulins. May indirectly play a role in neurite outgrowth. This Homo sapiens (Human) protein is MICAL-like protein 1 (MICALL1).